We begin with the raw amino-acid sequence, 263 residues long: MAVTTKQLIQWKQKGRPIVALTAYDYTIAQLLDNAGVDLILVGDSLGMVTLGYETTLPVTLEEMIHHAKAVRRAVKQALMVVDLPFLTYQESPQQAIHSAGRILKETGAQAVKLESGNEAIAQTVKKLTSIGIPVMGHIGLIPQSVHQFGGYPQQGNAPDASARILTEALALAEAGAFALVLEHIKADLAKEITEKVSIPTIGIGAGAYCDGQILVINDVLGLSHWQPPFAKPYVNLRETITQAVKEYSLEVKKRKFPQPPSP.

Residues aspartate 44 and aspartate 83 each coordinate Mg(2+). Residues 44-45, aspartate 83, and lysine 113 each bind 3-methyl-2-oxobutanoate; that span reads DS. Glutamate 115 serves as a coordination point for Mg(2+). Glutamate 183 (proton acceptor) is an active-site residue.

It belongs to the PanB family. Homodecamer; pentamer of dimers. It depends on Mg(2+) as a cofactor.

Its subcellular location is the cytoplasm. The enzyme catalyses 3-methyl-2-oxobutanoate + (6R)-5,10-methylene-5,6,7,8-tetrahydrofolate + H2O = 2-dehydropantoate + (6S)-5,6,7,8-tetrahydrofolate. It functions in the pathway cofactor biosynthesis; (R)-pantothenate biosynthesis; (R)-pantoate from 3-methyl-2-oxobutanoate: step 1/2. In terms of biological role, catalyzes the reversible reaction in which hydroxymethyl group from 5,10-methylenetetrahydrofolate is transferred onto alpha-ketoisovalerate to form ketopantoate. The polypeptide is 3-methyl-2-oxobutanoate hydroxymethyltransferase (Trichodesmium erythraeum (strain IMS101)).